Reading from the N-terminus, the 651-residue chain is Acetyl-coenzyme A synthetase (651 aa).

Residues 189–192, threonine 311, and asparagine 335 contribute to the CoA site; that span reads RGGK. ATP is bound by residues 387–389, 411–416, aspartate 500, and arginine 515; these read GEP and DTWWQT. A CoA-binding site is contributed by serine 523. Arginine 526 provides a ligand contact to ATP. Valine 537, histidine 539, and valine 542 together coordinate Mg(2+). A CoA-binding site is contributed by arginine 584. At lysine 609 the chain carries N6-acetyllysine.

It belongs to the ATP-dependent AMP-binding enzyme family. Requires Mg(2+) as cofactor. In terms of processing, acetylated. Deacetylation by the SIR2-homolog deacetylase activates the enzyme.

The enzyme catalyses acetate + ATP + CoA = acetyl-CoA + AMP + diphosphate. Functionally, catalyzes the conversion of acetate into acetyl-CoA (AcCoA), an essential intermediate at the junction of anabolic and catabolic pathways. AcsA undergoes a two-step reaction. In the first half reaction, AcsA combines acetate with ATP to form acetyl-adenylate (AcAMP) intermediate. In the second half reaction, it can then transfer the acetyl group from AcAMP to the sulfhydryl group of CoA, forming the product AcCoA. This is Acetyl-coenzyme A synthetase from Agrobacterium fabrum (strain C58 / ATCC 33970) (Agrobacterium tumefaciens (strain C58)).